The sequence spans 229 residues: Orotidine 5'-phosphate decarboxylase (229 aa).

Substrate is bound by residues D10, K32, 59–68 (DLKFHDIPNT), T119, R180, Q189, G209, and R210. K61 acts as the Proton donor in catalysis.

This sequence belongs to the OMP decarboxylase family. Type 1 subfamily. As to quaternary structure, homodimer.

The catalysed reaction is orotidine 5'-phosphate + H(+) = UMP + CO2. The protein operates within pyrimidine metabolism; UMP biosynthesis via de novo pathway; UMP from orotate: step 2/2. Its function is as follows. Catalyzes the decarboxylation of orotidine 5'-monophosphate (OMP) to uridine 5'-monophosphate (UMP). This is Orotidine 5'-phosphate decarboxylase from Legionella pneumophila subsp. pneumophila (strain Philadelphia 1 / ATCC 33152 / DSM 7513).